Reading from the N-terminus, the 238-residue chain is Ribonuclease PH (238 aa).

Residues Arg86 and 124–126 each bind phosphate; that span reads GTR.

Belongs to the RNase PH family. Homohexameric ring arranged as a trimer of dimers.

The enzyme catalyses tRNA(n+1) + phosphate = tRNA(n) + a ribonucleoside 5'-diphosphate. Functionally, phosphorolytic 3'-5' exoribonuclease that plays an important role in tRNA 3'-end maturation. Removes nucleotide residues following the 3'-CCA terminus of tRNAs; can also add nucleotides to the ends of RNA molecules by using nucleoside diphosphates as substrates, but this may not be physiologically important. Probably plays a role in initiation of 16S rRNA degradation (leading to ribosome degradation) during starvation. This Escherichia coli O6:K15:H31 (strain 536 / UPEC) protein is Ribonuclease PH.